Consider the following 109-residue polypeptide: MEVKAIHKSARISAQKTRLVADQIRGLPIARALNILNFSPKKAAFIVKKVVESAMANAEHNKGADIDELKVSTIIVDKGTSLKRFTARAKGRGNQIEKQTCHITVTLSN.

Belongs to the universal ribosomal protein uL22 family. As to quaternary structure, part of the 50S ribosomal subunit.

Functionally, this protein binds specifically to 23S rRNA; its binding is stimulated by other ribosomal proteins, e.g. L4, L17, and L20. It is important during the early stages of 50S assembly. It makes multiple contacts with different domains of the 23S rRNA in the assembled 50S subunit and ribosome. In terms of biological role, the globular domain of the protein is located near the polypeptide exit tunnel on the outside of the subunit, while an extended beta-hairpin is found that lines the wall of the exit tunnel in the center of the 70S ribosome. This chain is Large ribosomal subunit protein uL22, found in Polynucleobacter asymbioticus (strain DSM 18221 / CIP 109841 / QLW-P1DMWA-1) (Polynucleobacter necessarius subsp. asymbioticus).